A 269-amino-acid chain; its full sequence is Serine/threonine-protein kinase ZRK7 (269 aa).

A Protein kinase domain is found at 80–269 (FDWSYAIGVD…KNRLMVTVIT (190 aa)). ATP contacts are provided by residues 86–94 (IGVDRFVWY) and lysine 106. The Proton acceptor role is filled by aspartate 205.

It belongs to the protein kinase superfamily. Ser/Thr protein kinase family. ZRK subfamily.

It catalyses the reaction L-seryl-[protein] + ATP = O-phospho-L-seryl-[protein] + ADP + H(+). It carries out the reaction L-threonyl-[protein] + ATP = O-phospho-L-threonyl-[protein] + ADP + H(+). The protein is Serine/threonine-protein kinase ZRK7 of Arabidopsis thaliana (Mouse-ear cress).